A 305-amino-acid chain; its full sequence is Pseudouridine-5'-phosphate glycosidase (305 aa).

Residue Glu28 is the Proton donor of the active site. Lys89 and Val109 together coordinate substrate. Asp141 serves as a coordination point for Mn(2+). Residue 143–145 participates in substrate binding; sequence SAD. Catalysis depends on Lys162, which acts as the Nucleophile.

It belongs to the pseudouridine-5'-phosphate glycosidase family. Homotrimer. Mn(2+) is required as a cofactor.

It catalyses the reaction D-ribose 5-phosphate + uracil = psi-UMP + H2O. In terms of biological role, catalyzes the reversible cleavage of pseudouridine 5'-phosphate (PsiMP) to ribose 5-phosphate and uracil. Functions biologically in the cleavage direction, as part of a pseudouridine degradation pathway. The polypeptide is Pseudouridine-5'-phosphate glycosidase (Dinoroseobacter shibae (strain DSM 16493 / NCIMB 14021 / DFL 12)).